A 343-amino-acid chain; its full sequence is MSKKQKIAIVGATGAVGEELLNVLDELDFPVESILPLASAKSVGSEVEFKGKAYKVKELTENVFKENPIDIAFFSAGGSVSEKYAKFAVESGAVVIDNTSHFRMEKDVPLVVPECNPEDIKDWKKTGIIANPNCSTIQMVQVLKPLNDAFNLKRVDVSTYQAASGAGKEGMQELVEAMQSFFAFKLDEFEPQTFPYTLALNLIPQIDVFMDNDYTKEELKMVNETQKILHKNLEVSATCVRVPVLRSHSEAITMHFEKEIDVKKAKEILKKAPSVIVIDDPKNKKYPMPLMTSDTNETYVGRIRADVYDKKILHLWCVADQIRVGAATNAVRIAQKWLELKNK.

NADP(+)-binding positions include 13-16 and 41-42; these read TGAV and KS. A phosphate-binding site is contributed by R103. The active-site Acyl-thioester intermediate is C134. Q161 serves as a coordination point for substrate. 164–165 serves as a coordination point for NADP(+); the sequence is SG. K220 serves as a coordination point for phosphate. R241 serves as a coordination point for substrate. Residue H248 is the Proton acceptor of the active site. NADP(+) is bound at residue Q321.

Belongs to the aspartate-semialdehyde dehydrogenase family. In terms of assembly, homodimer.

It carries out the reaction L-aspartate 4-semialdehyde + phosphate + NADP(+) = 4-phospho-L-aspartate + NADPH + H(+). It participates in amino-acid biosynthesis; L-lysine biosynthesis via DAP pathway; (S)-tetrahydrodipicolinate from L-aspartate: step 2/4. Its pathway is amino-acid biosynthesis; L-methionine biosynthesis via de novo pathway; L-homoserine from L-aspartate: step 2/3. It functions in the pathway amino-acid biosynthesis; L-threonine biosynthesis; L-threonine from L-aspartate: step 2/5. Functionally, catalyzes the NADPH-dependent formation of L-aspartate-semialdehyde (L-ASA) by the reductive dephosphorylation of L-aspartyl-4-phosphate. The protein is Aspartate-semialdehyde dehydrogenase of Campylobacter jejuni subsp. jejuni serotype O:2 (strain ATCC 700819 / NCTC 11168).